The following is a 222-amino-acid chain: MASGYGDASQKIDYVFKVVLIGDSAVGKSQILARFARNEFSLDSKATIGVEFQTRTLAIQHKSVKAQIWDTAGQERYRAVTSAYYRGAVGAMLVYDITKRQTFDHIPRWLEELRAHADRNIVIMLIGNKTDLEDQRAVPTEDAKEFAQKEGLFFLETSAMEATNLEDAFLTVLTEIFNIVNKKNLAADDNQSNGNPASLTGKKILVPGPGQVIPEKKACCSS.

22-29 contributes to the GTP binding site; the sequence is GDSAVGKS. The Effector region signature appears at 44–52; sequence SKATIGVEF. GTP-binding positions include 70–74 and 128–131; these read DTAGQ and NKTD. S-geranylgeranyl cysteine attachment occurs at residues Cys219 and Cys220.

It belongs to the small GTPase superfamily. Rab family.

The protein resides in the cell membrane. In Nicotiana tabacum (Common tobacco), this protein is Ras-related protein Rab11D (RAB11D).